A 53-amino-acid polypeptide reads, in one-letter code: Conotoxin Cal6.23 (53 aa).

The signal sequence occupies residues 1 to 22 (MKLTAVLMVAVLVLTACQLITA). 3 disulfides stabilise this stretch: C25–C40, C32–C47, and C39–C51.

This sequence belongs to the conotoxin O1 superfamily. As to expression, expressed by the venom duct.

The protein localises to the secreted. In terms of biological role, probable neurotoxin. This chain is Conotoxin Cal6.23, found in Californiconus californicus (California cone).